A 404-amino-acid chain; its full sequence is Cytoplasmic tRNA 2-thiolation protein 2 (404 aa).

It belongs to the CTU2/NCS2 family.

The protein localises to the cytoplasm. It participates in tRNA modification; 5-methoxycarbonylmethyl-2-thiouridine-tRNA biosynthesis. Functionally, plays a central role in 2-thiolation of mcm(5)S(2)U at tRNA wobble positions of tRNA(Lys), tRNA(Glu) and tRNA(Gln). May act by forming a heterodimer with NCS6/CTU1 that ligates sulfur from thiocarboxylated URM1 onto the uridine of tRNAs at wobble position. The chain is Cytoplasmic tRNA 2-thiolation protein 2 from Drosophila yakuba (Fruit fly).